Consider the following 81-residue polypeptide: Photosystem I iron-sulfur center (81 aa).

2 4Fe-4S ferredoxin-type domains span residues 2–31 (SHSVKIYDTCIGCTQCVRACPTDVLEMIPW) and 39–68 (IASAPRTEDCVGCKRCESACPTDFLSVRVY). [4Fe-4S] cluster-binding residues include Cys-11, Cys-14, Cys-17, Cys-21, Cys-48, Cys-51, Cys-54, and Cys-58.

As to quaternary structure, the eukaryotic PSI reaction center is composed of at least 11 subunits. [4Fe-4S] cluster serves as cofactor.

The protein localises to the plastid. It localises to the chloroplast thylakoid membrane. It carries out the reaction reduced [plastocyanin] + hnu + oxidized [2Fe-2S]-[ferredoxin] = oxidized [plastocyanin] + reduced [2Fe-2S]-[ferredoxin]. Functionally, apoprotein for the two 4Fe-4S centers FA and FB of photosystem I (PSI); essential for photochemical activity. FB is the terminal electron acceptor of PSI, donating electrons to ferredoxin. The C-terminus interacts with PsaA/B/D and helps assemble the protein into the PSI complex. Required for binding of PsaD and PsaE to PSI. PSI is a plastocyanin-ferredoxin oxidoreductase, converting photonic excitation into a charge separation, which transfers an electron from the donor P700 chlorophyll pair to the spectroscopically characterized acceptors A0, A1, FX, FA and FB in turn. The chain is Photosystem I iron-sulfur center from Spinacia oleracea (Spinach).